Here is a 207-residue protein sequence, read N- to C-terminus: Small ribosomal subunit protein uS4c (207 aa).

Positions 22–51 (TQKNCTRDFPPGQHGPKKKGGGNQKTKESQ) are disordered. One can recognise an S4 RNA-binding domain in the interval 97–158 (MRLDTIIFRL…NSQNFVKNLL (62 aa)).

The protein belongs to the universal ribosomal protein uS4 family. Part of the 30S ribosomal subunit. Contacts protein S5. The interaction surface between S4 and S5 is involved in control of translational fidelity.

Its subcellular location is the plastid. The protein localises to the chloroplast. One of the primary rRNA binding proteins, it binds directly to 16S rRNA where it nucleates assembly of the body of the 30S subunit. Functionally, with S5 and S12 plays an important role in translational accuracy. In Chlorella vulgaris (Green alga), this protein is Small ribosomal subunit protein uS4c (rps4).